A 134-amino-acid chain; its full sequence is Large ribosomal subunit protein bL20 (134 aa).

It belongs to the bacterial ribosomal protein bL20 family.

Functionally, binds directly to 23S ribosomal RNA and is necessary for the in vitro assembly process of the 50S ribosomal subunit. It is not involved in the protein synthesizing functions of that subunit. In Brucella anthropi (strain ATCC 49188 / DSM 6882 / CCUG 24695 / JCM 21032 / LMG 3331 / NBRC 15819 / NCTC 12168 / Alc 37) (Ochrobactrum anthropi), this protein is Large ribosomal subunit protein bL20.